The following is a 293-amino-acid chain: MSIFKGSAVALITPFTQDGVNFDELKKLLEWHIKNKTDAIVICGTTGEASTMSLNERKETIKYTVETVNKRIPVIAGTGSNNTKSSVEMSIWAEKIGVDGVLVITPYYNKTTQKGLIEHFKSINDNINIPIILYNVPGRTGLNILPETLYAMRDLKNICAIKEASGNISQIAKIKALCRDRFDIYSGNDDQIVPILSLGGSGVISVLANIIPQTVHDMCFSYFQGKTTDALNLQLDTLSLTNSLFIETNPIPIKTAMNLLNFNAGPLRLPLCSMDEKNLNTLKTDLKGYGLIK.

T46 contributes to the pyruvate binding site. Y134 (proton donor/acceptor) is an active-site residue. K162 serves as the catalytic Schiff-base intermediate with substrate. I204 provides a ligand contact to pyruvate.

This sequence belongs to the DapA family. In terms of assembly, homotetramer; dimer of dimers.

It localises to the cytoplasm. The catalysed reaction is L-aspartate 4-semialdehyde + pyruvate = (2S,4S)-4-hydroxy-2,3,4,5-tetrahydrodipicolinate + H2O + H(+). Its pathway is amino-acid biosynthesis; L-lysine biosynthesis via DAP pathway; (S)-tetrahydrodipicolinate from L-aspartate: step 3/4. Catalyzes the condensation of (S)-aspartate-beta-semialdehyde [(S)-ASA] and pyruvate to 4-hydroxy-tetrahydrodipicolinate (HTPA). The protein is 4-hydroxy-tetrahydrodipicolinate synthase 1 of Clostridium acetobutylicum (strain ATCC 824 / DSM 792 / JCM 1419 / IAM 19013 / LMG 5710 / NBRC 13948 / NRRL B-527 / VKM B-1787 / 2291 / W).